Reading from the N-terminus, the 445-residue chain is DDB1- and CUL4-associated factor 13 (445 aa).

N6-acetyllysine is present on lysine 49. WD repeat units lie at residues 64 to 104, 107 to 146, 149 to 191, 194 to 234, 236 to 276, 280 to 319, and 323 to 362; these read GHRD…CIRT, AHEGFVRGICTRFCGTSFFTVGDDKTVKQWKMDGPGYGDE, PLHT…PICS, WGFD…PLKK, ILDM…TPVM, DHVSAVLDVDYSPTGKEFVSASFDKSIRIFPVDKSRSREV, and KRMQHVICVKWTSDSKYIMCGSDEMNIRLWKANASEKLGV. Positions 353 to 441 are required for nucleolar location; the sequence is KANASEKLGV…LVSEKKKHVV (89 aa).

It belongs to the WD repeat DCAF13/WDSOF1 family. In terms of assembly, part of the small subunit (SSU) processome, composed of more than 70 proteins and the RNA chaperone small nucleolar RNA (snoRNA) U3. Component of the DCX(DCAF13) E3 ubiquitin ligase complex, at least composed of CUL4 (CUL4A or CUL4B), DDB1, DCAF13 and RBX1. Interacts (via WD40 domain) with DDB1. Interacts with ESR1 and LATS1. Expressed in the endometrium during decidualization. Expression is down-regulated in preeclampsia decidual tissues.

It localises to the nucleus. Its subcellular location is the nucleolus. The protein operates within protein modification; protein ubiquitination. Functionally, part of the small subunit (SSU) processome, first precursor of the small eukaryotic ribosomal subunit. During the assembly of the SSU processome in the nucleolus, many ribosome biogenesis factors, an RNA chaperone and ribosomal proteins associate with the nascent pre-rRNA and work in concert to generate RNA folding, modifications, rearrangements and cleavage as well as targeted degradation of pre-ribosomal RNA by the RNA exosome. Participates in the 18S rRNA processing in growing oocytes, being essential for oocyte nonsurrounded nucleolus (NSN) to surrounded nucleolus (SN) transition. Its function is as follows. Substrate-recognition component of a DCX (DDB1-CUL4-X-box) E3 ubiquitin-protein ligase complex that plays a key role in embryo preimplantation and is required for normal meiotic cycle progression in oocytes. Acts as a maternal factor that regulates oocyte and zygotic chromatin tightness during maternal to zygotic transition. Also involved in the transformation of the endometrium into the decidua, known as decidualization, providing a solid foundation for implantation of blastocysts. Recognizes the histone methyltransferases SUV39H1 and SUV39H2 and directs them to polyubiquitination and proteasomal degradation, which facilitates the H3K9me3 removal and early zygotic gene expression, essential steps for progressive genome reprogramming and the establishment of pluripotency during preimplantation embryonic development. Supports the spindle assembly and chromosome condensation during oocyte meiotic division by targeting the polyubiquitination and degradation of PTEN, a lipid phosphatase that inhibits PI3K pathway as well as oocyte growth and maturation. Targets PMP22 for polyubiquitination and proteasomal degradation. The protein is DDB1- and CUL4-associated factor 13 of Homo sapiens (Human).